The primary structure comprises 508 residues: Photosystem II CP47 reaction center protein (508 aa).

The next 6 helical transmembrane spans lie at 21-36 (AVHI…WAGS), 101-115 (ILFS…IWHW), 140-156 (GIHL…FGAF), 203-218 (IAAG…FHLS), 237-252 (VLSS…AFVV), and 457-472 (SFAL…HGAR).

It belongs to the PsbB/PsbC family. PsbB subfamily. PSII is composed of 1 copy each of membrane proteins PsbA, PsbB, PsbC, PsbD, PsbE, PsbF, PsbH, PsbI, PsbJ, PsbK, PsbL, PsbM, PsbT, PsbX, PsbY, PsbZ, Psb30/Ycf12, at least 3 peripheral proteins of the oxygen-evolving complex and a large number of cofactors. It forms dimeric complexes. Binds multiple chlorophylls. PSII binds additional chlorophylls, carotenoids and specific lipids. serves as cofactor.

Its subcellular location is the plastid. The protein localises to the chloroplast thylakoid membrane. Its function is as follows. One of the components of the core complex of photosystem II (PSII). It binds chlorophyll and helps catalyze the primary light-induced photochemical processes of PSII. PSII is a light-driven water:plastoquinone oxidoreductase, using light energy to abstract electrons from H(2)O, generating O(2) and a proton gradient subsequently used for ATP formation. The chain is Photosystem II CP47 reaction center protein from Oenothera biennis (German evening primrose).